Consider the following 123-residue polypeptide: UPF0102 protein Csal_2201 (123 aa).

The protein belongs to the UPF0102 family.

This Chromohalobacter salexigens (strain ATCC BAA-138 / DSM 3043 / CIP 106854 / NCIMB 13768 / 1H11) protein is UPF0102 protein Csal_2201.